A 577-amino-acid polypeptide reads, in one-letter code: Sensory neuron membrane protein 2 (577 aa).

At 1-6 (MVQCTL) the chain is on the cytoplasmic side. A helical transmembrane segment spans residues 7-27 (IWAGIGAMMAVSGALLGWVVF). At 28–519 (PRAVHEKVIE…LMKVLSLLDV (492 aa)) the chain is on the extracellular side. N-linked (GlcNAc...) asparagine glycans are attached at residues N66, N161, N271, and N307. 3 disulfides stabilise this stretch: C316–C384, C345–C411, and C386–C400. Residues 520–540 (VQWVLIGVGLLLAVLMPTVYF) traverse the membrane as a helical segment. The Cytoplasmic portion of the chain corresponds to 541 to 577 (VKRCRGEGSRTVSPAVTATTSAASLSTVAGVTGDRSK).

The protein belongs to the CD36 family.

It localises to the cell membrane. Plays an olfactory role that is not restricted to pheromone sensitivity. This Anopheles gambiae (African malaria mosquito) protein is Sensory neuron membrane protein 2.